Reading from the N-terminus, the 302-residue chain is 4-hydroxy-tetrahydrodipicolinate synthase (302 aa).

T49 is a binding site for pyruvate. Y137 serves as the catalytic Proton donor/acceptor. K166 functions as the Schiff-base intermediate with substrate in the catalytic mechanism. Residue I208 participates in pyruvate binding.

This sequence belongs to the DapA family. Homotetramer; dimer of dimers.

It localises to the cytoplasm. The catalysed reaction is L-aspartate 4-semialdehyde + pyruvate = (2S,4S)-4-hydroxy-2,3,4,5-tetrahydrodipicolinate + H2O + H(+). It participates in amino-acid biosynthesis; L-lysine biosynthesis via DAP pathway; (S)-tetrahydrodipicolinate from L-aspartate: step 3/4. In terms of biological role, catalyzes the condensation of (S)-aspartate-beta-semialdehyde [(S)-ASA] and pyruvate to 4-hydroxy-tetrahydrodipicolinate (HTPA). The chain is 4-hydroxy-tetrahydrodipicolinate synthase from Chloroherpeton thalassium (strain ATCC 35110 / GB-78).